A 194-amino-acid polypeptide reads, in one-letter code: Imidazoleglycerol-phosphate dehydratase (194 aa).

This sequence belongs to the imidazoleglycerol-phosphate dehydratase family.

It is found in the cytoplasm. The enzyme catalyses D-erythro-1-(imidazol-4-yl)glycerol 3-phosphate = 3-(imidazol-4-yl)-2-oxopropyl phosphate + H2O. It functions in the pathway amino-acid biosynthesis; L-histidine biosynthesis; L-histidine from 5-phospho-alpha-D-ribose 1-diphosphate: step 6/9. This Halalkalibacterium halodurans (strain ATCC BAA-125 / DSM 18197 / FERM 7344 / JCM 9153 / C-125) (Bacillus halodurans) protein is Imidazoleglycerol-phosphate dehydratase.